Consider the following 175-residue polypeptide: MRYCRLGVSSMRPKLKVRGQYIKDLSFENPNSPKVFLMISKSPPEISISVNVSSASLPVKPTEGEQAAADLYEVTLQVNIESVVEKVPAFLCELKYCGVFSLEEKAEEQVVKEALLITAPGVLFPFVREVIAKMTASAGFPPLMLDVIDFEAMYASQLGGDDGKNKQANKSGGAA.

Belongs to the SecB family. In terms of assembly, homotetramer, a dimer of dimers. One homotetramer interacts with 1 SecA dimer.

Its subcellular location is the cytoplasm. One of the proteins required for the normal export of preproteins out of the cell cytoplasm. It is a molecular chaperone that binds to a subset of precursor proteins, maintaining them in a translocation-competent state. It also specifically binds to its receptor SecA. The protein is Protein-export protein SecB of Anaplasma marginale (strain Florida).